Consider the following 231-residue polypeptide: Small ribosomal subunit protein uS3 (231 aa).

Residues 17-86 (VEKYLTKELK…SPQIEVQQVQ (70 aa)) enclose the KH type-2 domain.

It belongs to the universal ribosomal protein uS3 family. As to quaternary structure, part of the 30S ribosomal subunit.

Functionally, binds the lower part of the 30S subunit head. This chain is Small ribosomal subunit protein uS3, found in Methanoregula boonei (strain DSM 21154 / JCM 14090 / 6A8).